Here is a 255-residue protein sequence, read N- to C-terminus: Triosephosphate isomerase (255 aa).

9 to 11 provides a ligand contact to substrate; the sequence is NWK. The active-site Electrophile is histidine 95. Residue glutamate 167 is the Proton acceptor of the active site. Substrate is bound by residues glycine 173, serine 212, and 233–234; that span reads GG.

This sequence belongs to the triosephosphate isomerase family. Homodimer.

It localises to the cytoplasm. The enzyme catalyses D-glyceraldehyde 3-phosphate = dihydroxyacetone phosphate. The protein operates within carbohydrate biosynthesis; gluconeogenesis. It functions in the pathway carbohydrate degradation; glycolysis; D-glyceraldehyde 3-phosphate from glycerone phosphate: step 1/1. Functionally, involved in the gluconeogenesis. Catalyzes stereospecifically the conversion of dihydroxyacetone phosphate (DHAP) to D-glyceraldehyde-3-phosphate (G3P). This chain is Triosephosphate isomerase, found in Klebsiella pneumoniae.